The chain runs to 315 residues: GTP cyclohydrolase MptA (315 aa).

This sequence belongs to the GTP cyclohydrolase IV family. In terms of assembly, homodimer. It depends on Fe(2+) as a cofactor.

The catalysed reaction is GTP + H2O = 7,8-dihydroneopterin 2',3'-cyclic phosphate + formate + diphosphate + H(+). The protein operates within cofactor biosynthesis; 5,6,7,8-tetrahydromethanopterin biosynthesis. In terms of biological role, converts GTP to 7,8-dihydro-D-neopterin 2',3'-cyclic phosphate, the first intermediate in the biosynthesis of coenzyme methanopterin. The chain is GTP cyclohydrolase MptA from Methanococcus maripaludis (strain C6 / ATCC BAA-1332).